The primary structure comprises 282 residues: NADPH-dependent 7-cyano-7-deazaguanine reductase (282 aa).

88–90 (IES) provides a ligand contact to substrate. Residue 90 to 91 (SK) participates in NADPH binding. Cys-190 acts as the Thioimide intermediate in catalysis. Asp-197 functions as the Proton donor in the catalytic mechanism. Residue 229–230 (HE) coordinates substrate. 258–259 (RG) is a binding site for NADPH.

This sequence belongs to the GTP cyclohydrolase I family. QueF type 2 subfamily. As to quaternary structure, homodimer.

The protein resides in the cytoplasm. The enzyme catalyses 7-aminomethyl-7-carbaguanine + 2 NADP(+) = 7-cyano-7-deazaguanine + 2 NADPH + 3 H(+). It participates in tRNA modification; tRNA-queuosine biosynthesis. Catalyzes the NADPH-dependent reduction of 7-cyano-7-deazaguanine (preQ0) to 7-aminomethyl-7-deazaguanine (preQ1). The chain is NADPH-dependent 7-cyano-7-deazaguanine reductase from Escherichia coli (strain K12 / MC4100 / BW2952).